A 347-amino-acid chain; its full sequence is Ribosomal RNA small subunit methyltransferase C (347 aa).

It belongs to the methyltransferase superfamily. RsmC family. In terms of assembly, monomer.

Its subcellular location is the cytoplasm. It carries out the reaction guanosine(1207) in 16S rRNA + S-adenosyl-L-methionine = N(2)-methylguanosine(1207) in 16S rRNA + S-adenosyl-L-homocysteine + H(+). In terms of biological role, specifically methylates the guanine in position 1207 of 16S rRNA in the 30S particle. The chain is Ribosomal RNA small subunit methyltransferase C from Shewanella baltica (strain OS185).